The sequence spans 356 residues: Butyrate kinase (356 aa).

It belongs to the acetokinase family.

The protein localises to the cytoplasm. The catalysed reaction is butanoate + ATP = butanoyl phosphate + ADP. It functions in the pathway lipid metabolism; butanoate metabolism. Its function is as follows. Catalyzes the conversion of butyryl-CoA through butyryl phosphate to butyrate. In Clostridium tetani (strain Massachusetts / E88), this protein is Butyrate kinase.